Here is a 263-residue protein sequence, read N- to C-terminus: Acyl-[acyl-carrier-protein]--UDP-N-acetylglucosamine O-acyltransferase (263 aa).

Belongs to the transferase hexapeptide repeat family. LpxA subfamily. Homotrimer.

Its subcellular location is the cytoplasm. It carries out the reaction a (3R)-hydroxyacyl-[ACP] + UDP-N-acetyl-alpha-D-glucosamine = a UDP-3-O-[(3R)-3-hydroxyacyl]-N-acetyl-alpha-D-glucosamine + holo-[ACP]. Its pathway is glycolipid biosynthesis; lipid IV(A) biosynthesis; lipid IV(A) from (3R)-3-hydroxytetradecanoyl-[acyl-carrier-protein] and UDP-N-acetyl-alpha-D-glucosamine: step 1/6. Functionally, involved in the biosynthesis of lipid A, a phosphorylated glycolipid that anchors the lipopolysaccharide to the outer membrane of the cell. The protein is Acyl-[acyl-carrier-protein]--UDP-N-acetylglucosamine O-acyltransferase of Campylobacter jejuni (strain RM1221).